The primary structure comprises 447 residues: Tubulin beta chain (447 aa).

Residues Q11, E69, S138, G142, T143, G144, N204, and N226 each contribute to the GTP site. Residue E69 participates in Mg(2+) binding. A disordered region spans residues 424–447 (QYQEASVSEGEEEYDEEAPLEGEE). Positions 432–447 (EGEEEYDEEAPLEGEE) are enriched in acidic residues.

This sequence belongs to the tubulin family. Dimer of alpha and beta chains. A typical microtubule is a hollow water-filled tube with an outer diameter of 25 nm and an inner diameter of 15 nM. Alpha-beta heterodimers associate head-to-tail to form protofilaments running lengthwise along the microtubule wall with the beta-tubulin subunit facing the microtubule plus end conferring a structural polarity. Microtubules usually have 13 protofilaments but different protofilament numbers can be found in some organisms and specialized cells. Mg(2+) is required as a cofactor.

It is found in the cytoplasm. The protein resides in the cytoskeleton. Its function is as follows. Tubulin is the major constituent of microtubules, a cylinder consisting of laterally associated linear protofilaments composed of alpha- and beta-tubulin heterodimers. Microtubules grow by the addition of GTP-tubulin dimers to the microtubule end, where a stabilizing cap forms. Below the cap, tubulin dimers are in GDP-bound state, owing to GTPase activity of alpha-tubulin. The polypeptide is Tubulin beta chain (TUB1) (Cercospora beticola (Sugarbeet leaf spot fungus)).